Here is a 329-residue protein sequence, read N- to C-terminus: Putative glucose-6-phosphate 1-epimerase (329 aa).

The span at 1–13 (MAAPAPAGAAASP) shows a compositional bias: low complexity. Residues 1 to 20 (MAAPAPAGAAASPSPKPQLP) form a disordered region. 3 residues coordinate substrate: Arg82, Gln100, and Arg105. The active site involves His183. Asp228 provides a ligand contact to substrate. Glu287 is a catalytic residue.

Belongs to the glucose-6-phosphate 1-epimerase family.

It catalyses the reaction alpha-D-glucose 6-phosphate = beta-D-glucose 6-phosphate. This is Putative glucose-6-phosphate 1-epimerase from Cenchrus ciliaris (Buffelgrass).